The following is a 242-amino-acid chain: Putative S-adenosyl-L-methionine-dependent methyltransferase Mmcs_0580 (242 aa).

S-adenosyl-L-methionine is bound by residues aspartate 104 and 134–135 (DL).

It belongs to the UPF0677 family.

Functionally, exhibits S-adenosyl-L-methionine-dependent methyltransferase activity. This is Putative S-adenosyl-L-methionine-dependent methyltransferase Mmcs_0580 from Mycobacterium sp. (strain MCS).